The primary structure comprises 79 residues: Small ribosomal subunit protein bS18 (79 aa).

It belongs to the bacterial ribosomal protein bS18 family. Part of the 30S ribosomal subunit. Forms a tight heterodimer with protein bS6.

Its function is as follows. Binds as a heterodimer with protein bS6 to the central domain of the 16S rRNA, where it helps stabilize the platform of the 30S subunit. In Micrococcus luteus (strain ATCC 4698 / DSM 20030 / JCM 1464 / CCM 169 / CCUG 5858 / IAM 1056 / NBRC 3333 / NCIMB 9278 / NCTC 2665 / VKM Ac-2230) (Micrococcus lysodeikticus), this protein is Small ribosomal subunit protein bS18.